A 277-amino-acid polypeptide reads, in one-letter code: 4-hydroxy-3-methylbut-2-enyl diphosphate reductase (277 aa).

Cysteine 12 contributes to the [4Fe-4S] cluster binding site. Residues histidine 36 and histidine 70 each contribute to the (2E)-4-hydroxy-3-methylbut-2-enyl diphosphate site. Dimethylallyl diphosphate contacts are provided by histidine 36 and histidine 70. Isopentenyl diphosphate contacts are provided by histidine 36 and histidine 70. Residue cysteine 92 coordinates [4Fe-4S] cluster. Residue histidine 120 coordinates (2E)-4-hydroxy-3-methylbut-2-enyl diphosphate. Residue histidine 120 coordinates dimethylallyl diphosphate. Isopentenyl diphosphate is bound at residue histidine 120. Glutamate 122 functions as the Proton donor in the catalytic mechanism. Residue threonine 158 coordinates (2E)-4-hydroxy-3-methylbut-2-enyl diphosphate. [4Fe-4S] cluster is bound at residue cysteine 186. Serine 214, asparagine 216, and serine 258 together coordinate (2E)-4-hydroxy-3-methylbut-2-enyl diphosphate. Residues serine 214, asparagine 216, and serine 258 each contribute to the dimethylallyl diphosphate site. Isopentenyl diphosphate is bound by residues serine 214, asparagine 216, and serine 258.

The protein belongs to the IspH family. [4Fe-4S] cluster serves as cofactor.

It carries out the reaction isopentenyl diphosphate + 2 oxidized [2Fe-2S]-[ferredoxin] + H2O = (2E)-4-hydroxy-3-methylbut-2-enyl diphosphate + 2 reduced [2Fe-2S]-[ferredoxin] + 2 H(+). The catalysed reaction is dimethylallyl diphosphate + 2 oxidized [2Fe-2S]-[ferredoxin] + H2O = (2E)-4-hydroxy-3-methylbut-2-enyl diphosphate + 2 reduced [2Fe-2S]-[ferredoxin] + 2 H(+). Its pathway is isoprenoid biosynthesis; dimethylallyl diphosphate biosynthesis; dimethylallyl diphosphate from (2E)-4-hydroxy-3-methylbutenyl diphosphate: step 1/1. It participates in isoprenoid biosynthesis; isopentenyl diphosphate biosynthesis via DXP pathway; isopentenyl diphosphate from 1-deoxy-D-xylulose 5-phosphate: step 6/6. Its function is as follows. Catalyzes the conversion of 1-hydroxy-2-methyl-2-(E)-butenyl 4-diphosphate (HMBPP) into a mixture of isopentenyl diphosphate (IPP) and dimethylallyl diphosphate (DMAPP). Acts in the terminal step of the DOXP/MEP pathway for isoprenoid precursor biosynthesis. The protein is 4-hydroxy-3-methylbut-2-enyl diphosphate reductase of Campylobacter jejuni subsp. jejuni serotype O:2 (strain ATCC 700819 / NCTC 11168).